Consider the following 82-residue polypeptide: RNA-binding protein Hfq (82 aa).

The region spanning 9 to 68 (DPYLNTLRKERVPVSIYLVNGIKLQGQIESFDQFVILLKNTVSQMVYKTAISTVVPSRPV) is the Sm domain.

The protein belongs to the Hfq family. As to quaternary structure, homohexamer.

In terms of biological role, RNA chaperone that binds small regulatory RNA (sRNAs) and mRNAs to facilitate mRNA translational regulation in response to envelope stress, environmental stress and changes in metabolite concentrations. Also binds with high specificity to tRNAs. The protein is RNA-binding protein Hfq of Pseudomonas aeruginosa.